Here is a 260-residue protein sequence, read N- to C-terminus: Ribonuclease PH (260 aa).

Residues Arg-87 and 125-127 (GTR) contribute to the phosphate site. The interval 232-260 (LAAPPAAGPPAPERAGAGSGSGGKGTGSR) is disordered. Residues 248-260 (AGSGSGGKGTGSR) are compositionally biased toward gly residues.

It belongs to the RNase PH family. As to quaternary structure, homohexameric ring arranged as a trimer of dimers.

The enzyme catalyses tRNA(n+1) + phosphate = tRNA(n) + a ribonucleoside 5'-diphosphate. Functionally, phosphorolytic 3'-5' exoribonuclease that plays an important role in tRNA 3'-end maturation. Removes nucleotide residues following the 3'-CCA terminus of tRNAs; can also add nucleotides to the ends of RNA molecules by using nucleoside diphosphates as substrates, but this may not be physiologically important. Probably plays a role in initiation of 16S rRNA degradation (leading to ribosome degradation) during starvation. This Parafrankia sp. (strain EAN1pec) protein is Ribonuclease PH.